Here is a 462-residue protein sequence, read N- to C-terminus: Cysteine--tRNA ligase (462 aa).

Cysteine 24 is a Zn(2+) binding site. Residues 26-36 carry the 'HIGH' region motif; the sequence is PTVYDDAHLGH. Zn(2+)-binding residues include cysteine 199, histidine 224, and glutamate 228. The 'KMSKS' region motif lies at 256–260; the sequence is KMSKS. Lysine 259 is a binding site for ATP.

Belongs to the class-I aminoacyl-tRNA synthetase family. In terms of assembly, monomer. The cofactor is Zn(2+).

It localises to the cytoplasm. It carries out the reaction tRNA(Cys) + L-cysteine + ATP = L-cysteinyl-tRNA(Cys) + AMP + diphosphate. The polypeptide is Cysteine--tRNA ligase (Campylobacter jejuni subsp. doylei (strain ATCC BAA-1458 / RM4099 / 269.97)).